The sequence spans 689 residues: Beta-galactosidase BbgII (689 aa).

Positions 122 and 160 each coordinate substrate. The active-site Proton donor is the Glu-161. The active-site Nucleophile is the Glu-320. Substrate-binding positions include Trp-328 and Glu-368–His-371.

It belongs to the glycosyl hydrolase 42 family.

The catalysed reaction is Hydrolysis of terminal non-reducing beta-D-galactose residues in beta-D-galactosides.. The polypeptide is Beta-galactosidase BbgII (Bifidobacterium bifidum (strain DSM 20082 / JCM 1254 / BCRC 11844 / KCTC 3440 / E319f (Variant a))).